Reading from the N-terminus, the 1091-residue chain is Integrin alpha-6 (1091 aa).

The first 23 residues, 1–23 (MAVAGQLCLLYLSAGLLARLGTA), serve as a signal peptide directing secretion. Residues 24–1011 (FNLDTREDNV…FPSKTVAQYS (988 aa)) lie on the Extracellular side of the membrane. 7 FG-GAP repeats span residues 30–95 (EDNV…GPCT), 101–166 (NDAD…IEDD), 176–229 (DGRL…FFDM), 244–300 (DHDE…KSAH), 301–363 (LLPE…KWSN), 364–419 (VKPI…GIIT), and 420–479 (KPTQ…VTPN). N-linked (GlcNAc...) asparagine glycosylation is present at N78. Intrachain disulfides connect C86–C94, C131–C154, and C175–C188. N-linked (GlcNAc...) asparagine glycans are attached at residues N223 and N284. Ca(2+) is bound by residues D324, N326, D328, and D332. The N-linked (GlcNAc...) asparagine glycan is linked to N370. Ca(2+)-binding residues include D386, N388, D390, Y392, D394, D441, D443, N445, Y447, and D449. Disulfide bonds link C489–C496, C502–C562, C626–C632, and C726–C737. N731, N746, and N927 each carry an N-linked (GlcNAc...) asparagine glycan. 2 disulfides stabilise this stretch: C881–C928 and C934–C939. An N-linked (GlcNAc...) asparagine glycan is attached at N958. Residues 1012–1037 (GVAWWIILLAVLAGILMLALLVFLLW) form a helical membrane-spanning segment. The Cytoplasmic segment spans residues 1038 to 1091 (KCGFFKRSRYDDSIPRYHAVRIRKEEREIKDEKHMDNLEKKQWITKWNENESYS). C1039 carries the S-palmitoyl cysteine; by DHHC3 lipid modification. The GFFKR motif motif lies at 1040-1044 (GFFKR). Position 1064 is a phosphoserine (R1064).

This sequence belongs to the integrin alpha chain family. In terms of assembly, heterodimer of an alpha and a beta subunit. The alpha subunit is composed of a heavy and a light chain linked by a disulfide bond. Alpha-6 associates with either beta-1 (ITGB1) or beta-4 (ITGB4) to form ITGA6:ITGB1 and ITGA6:ITGB4, respectively. ITGA6:ITGB1 is found in a complex with CD9; interaction takes place in oocytes and is involved in sperm-egg fusion. ITGA6:ITGB4 is found in a ternary complex with NRG1 and ERBB3. ITGA6:ITGB4 is found in a ternary complex with IGF1 and IGF1R. ITGA6:ITGB4 interacts with IGF2. Interacts with ADAM9. Interacts with RAB21. Interacts with MDK. ITGA6:ITGB1 interacts with MDK; this interaction mediates MDK-induced neurite outgrowth. Interacts with CD82; this interaction down-regulates ITGA6-mediated cell adhesion. In terms of processing, isoforms containing segment A, but not segment B, are the major targets for PMA-induced phosphorylation. Phosphorylation occurs on 'Ser-1064' of isoform alpha-6X1A. Phosphorylation is not required for the induction of integrin alpha-6A/beta-1 high affinity but may reduce the affinity for ligand. Post-translationally, undergoes PLAU-mediated cleavage at residues Arg-595-596-Arg in a time-dependent manner to produce processed integrin alpha-6 (alpha6p). Palmitoylation by DHHC3 enhances stability and cell surface expression. In terms of tissue distribution, expressed at low levels in normal skin tissue with elevated levels in skin tumors.

The protein localises to the cell membrane. Integrin alpha-6/beta-1 (ITGA6:ITGB1) is a receptor for laminin on platelets. Integrin alpha-6/beta-1 (ITGA6:ITGB1) is present in oocytes and is involved in sperm-egg fusion. Integrin alpha-6/beta-4 (ITGA6:ITGB4) is a receptor for laminin in epithelial cells and it plays a critical structural role in the hemidesmosome. ITGA6:ITGB4 binds to NRG1 (via EGF domain) and this binding is essential for NRG1-ERBB signaling. ITGA6:ITGB4 binds to IGF1 and this binding is essential for IGF1 signaling. ITGA6:ITGB4 binds to IGF2 and this binding is essential for IGF2 signaling. The polypeptide is Integrin alpha-6 (Itga6) (Mus musculus (Mouse)).